The primary structure comprises 185 residues: Peptidyl-tRNA hydrolase (185 aa).

A tRNA-binding site is contributed by Y14. The active-site Proton acceptor is the H19. TRNA is bound by residues F64, N66, and N112.

Belongs to the PTH family. Monomer.

The protein localises to the cytoplasm. It carries out the reaction an N-acyl-L-alpha-aminoacyl-tRNA + H2O = an N-acyl-L-amino acid + a tRNA + H(+). Hydrolyzes ribosome-free peptidyl-tRNAs (with 1 or more amino acids incorporated), which drop off the ribosome during protein synthesis, or as a result of ribosome stalling. Its function is as follows. Catalyzes the release of premature peptidyl moieties from peptidyl-tRNA molecules trapped in stalled 50S ribosomal subunits, and thus maintains levels of free tRNAs and 50S ribosomes. The protein is Peptidyl-tRNA hydrolase of Alkaliphilus oremlandii (strain OhILAs) (Clostridium oremlandii (strain OhILAs)).